Consider the following 405-residue polypeptide: MVEKVRNIVVEELVRTPVEMQEVELVERKGIGHPDSIADGIAEAVSRALSREYLKRYGIILHHNTDQVEVVGGRAYPQFGGGEVIKPIYILLSGRAVELVDREEFPVHQVAIKAAKDYLKKAVRHLDIENHVVIDSRIGQGSVDLVGVFNKAKENPIPLANDTSFGVGYAPLSETERIVLETEKLLNSEEFKKKCPAVGEDIKVMGLRKGDEIDLTIAAAIVDSEVSNPDDYMAVKEEIYEAAKGVVEEHTQRPTKIFVNTADDPKNGIYYITVTGTSAEAGDDGSVGRGNRVNGLITPNRHMSMEAAAGKNPVSHVGKIYNLLSMLIANDIAEQVEGVQEVYVRILSQIGKPIDEPLVASIQIIPKKGYSIDVLQKPAYEIADAWLADVTKIQKMILDDKLNVF.

ATP is bound at residue 139–144 (GQGSVD).

It belongs to the AdoMet synthase 2 family. Mg(2+) serves as cofactor.

It carries out the reaction L-methionine + ATP + H2O = S-adenosyl-L-methionine + phosphate + diphosphate. It participates in amino-acid biosynthesis; S-adenosyl-L-methionine biosynthesis; S-adenosyl-L-methionine from L-methionine: step 1/1. Functionally, catalyzes the formation of S-adenosylmethionine from methionine and ATP. This Thermococcus gammatolerans (strain DSM 15229 / JCM 11827 / EJ3) protein is S-adenosylmethionine synthase.